A 269-amino-acid polypeptide reads, in one-letter code: Imidazoleglycerol-phosphate dehydratase 1, chloroplastic (269 aa).

Disordered stretches follow at residues 1-31 and 54-73; these read MTTAPFVSPSLPRLHSARASPFPKPSVGSGG and SGVGGNGSPMAPEESTVSSR. Residues 1-52 constitute a chloroplast transit peptide; sequence MTTAPFVSPSLPRLHSARASPFPKPSVGSGGGVAFPARTYGSSLRLRSAVMS. Substrate is bound by residues glutamate 83, 109–117, 135–139, arginine 161, and arginine 183; these read HMLDQLASH and HHSNE. 4 residues coordinate Mn(2+): histidine 109, histidine 135, histidine 136, and glutamate 139. Residues histidine 207, histidine 231, histidine 232, and glutamate 235 each coordinate Mn(2+). Residues 231 to 239 and 261 to 263 contribute to the substrate site; these read HHIIEATFK and SSK.

The protein belongs to the imidazoleglycerol-phosphate dehydratase family. Mn(2+) is required as a cofactor.

It is found in the plastid. The protein localises to the chloroplast. The catalysed reaction is D-erythro-1-(imidazol-4-yl)glycerol 3-phosphate = 3-(imidazol-4-yl)-2-oxopropyl phosphate + H2O. Its pathway is amino-acid biosynthesis; L-histidine biosynthesis; L-histidine from 5-phospho-alpha-D-ribose 1-diphosphate: step 6/9. The sequence is that of Imidazoleglycerol-phosphate dehydratase 1, chloroplastic from Triticum aestivum (Wheat).